Consider the following 164-residue polypeptide: Ferritin heavy chain (164 aa).

Positions 1 to 141 (AINRQINLEL…DHVTNLRKMG (141 aa)) constitute a Ferritin-like diiron domain. Fe cation-binding residues include glutamate 9, glutamate 44, histidine 47, glutamate 89, and glutamine 123. A phosphoserine mark is found at serine 160 and serine 164.

It belongs to the ferritin family. In terms of assembly, oligomer of 24 subunits. There are two types of subunits: L (light) chain and H (heavy) chain. The major chain can be light or heavy, depending on the species and tissue type. The functional molecule forms a roughly spherical shell with a diameter of 12 nm and contains a central cavity into which the insoluble mineral iron core is deposited. Interacts with NCOA4; NCOA4 promotes targeting of the iron-binding ferritin complex to autolysosomes following starvation or iron depletion.

It localises to the cytoplasm. The protein resides in the lysosome. Its subcellular location is the cytoplasmic vesicle. The protein localises to the autophagosome. The catalysed reaction is 4 Fe(2+) + O2 + 4 H(+) = 4 Fe(3+) + 2 H2O. Its function is as follows. Stores iron in a soluble, non-toxic, readily available form. Important for iron homeostasis. Has ferroxidase activity. Iron is taken up in the ferrous form and deposited as ferric hydroxides after oxidation. Also plays a role in delivery of iron to cells. Mediates iron uptake in capsule cells of the developing kidney. Delivery to lysosomes is mediated by the cargo receptor NCOA4 for autophagic degradation and release of iron. In Oryctolagus cuniculus (Rabbit), this protein is Ferritin heavy chain (FTH1).